The following is a 298-amino-acid chain: 4-hydroxy-tetrahydrodipicolinate synthase (298 aa).

Pyruvate is bound at residue threonine 48. Tyrosine 137 acts as the Proton donor/acceptor in catalysis. The Schiff-base intermediate with substrate role is filled by lysine 166. Isoleucine 207 provides a ligand contact to pyruvate.

It belongs to the DapA family. As to quaternary structure, homotetramer; dimer of dimers.

Its subcellular location is the cytoplasm. It catalyses the reaction L-aspartate 4-semialdehyde + pyruvate = (2S,4S)-4-hydroxy-2,3,4,5-tetrahydrodipicolinate + H2O + H(+). It participates in amino-acid biosynthesis; L-lysine biosynthesis via DAP pathway; (S)-tetrahydrodipicolinate from L-aspartate: step 3/4. Catalyzes the condensation of (S)-aspartate-beta-semialdehyde [(S)-ASA] and pyruvate to 4-hydroxy-tetrahydrodipicolinate (HTPA). The chain is 4-hydroxy-tetrahydrodipicolinate synthase from Campylobacter lari (strain RM2100 / D67 / ATCC BAA-1060).